A 97-amino-acid polypeptide reads, in one-letter code: Small ribosomal subunit protein bS18c (97 aa).

This sequence belongs to the bacterial ribosomal protein bS18 family. As to quaternary structure, part of the 30S ribosomal subunit.

It is found in the plastid. The protein localises to the chloroplast. The sequence is that of Small ribosomal subunit protein bS18c from Oenothera glazioviana (Large-flowered evening primrose).